The chain runs to 283 residues: Small ribosomal subunit protein uS2B (283 aa).

The segment at 254–283 (GQVGQSAWDEEGDWNTTGAAQTSDWANTVA) is disordered. Residues 267 to 283 (WNTTGAAQTSDWANTVA) show a composition bias toward polar residues.

Belongs to the universal ribosomal protein uS2 family. Component of the small ribosomal subunit. Mature ribosomes consist of a small (40S) and a large (60S) subunit. The 40S subunit contains about 33 different proteins and 1 molecule of RNA (18S). The 60S subunit contains about 49 different proteins and 3 molecules of RNA (25S, 5.8S and 5S). Interacts with rps21.

It localises to the cytoplasm. Required for the assembly and/or stability of the 40S ribosomal subunit. Required for the processing of the 20S rRNA-precursor to mature 18S rRNA in a late step of the maturation of 40S ribosomal subunits. The sequence is that of Small ribosomal subunit protein uS2B (rps0b) from Schizosaccharomyces japonicus (strain yFS275 / FY16936) (Fission yeast).